The following is a 72-amino-acid chain: UPF0729 protein C18orf32 homolog (72 aa).

The segment at 1 to 33 is necessary for its localzation to the endoplasmic reticulum and lipid droplets; it reads MVCIPCIVIPVLLWIFKKFLEPYIYPVVSRIWP. Residues 36 to 72 are disordered; sequence AVQQSGDKNMSKVDCKGAGTNGLPTKGPTEVSDKKKD.

This sequence belongs to the UPF0729 family. Interacts with DERL1 and AMFR. Undergoes ER-associated degradation (ERAD).

It localises to the endoplasmic reticulum. The protein localises to the lipid droplet. In terms of biological role, may activate the NF-kappa-B signaling pathway. This Mus musculus (Mouse) protein is UPF0729 protein C18orf32 homolog.